The primary structure comprises 132 residues: Small ribosomal subunit protein uS8 (132 aa).

The protein belongs to the universal ribosomal protein uS8 family. In terms of assembly, part of the 30S ribosomal subunit. Contacts proteins S5 and S12.

Its function is as follows. One of the primary rRNA binding proteins, it binds directly to 16S rRNA central domain where it helps coordinate assembly of the platform of the 30S subunit. This chain is Small ribosomal subunit protein uS8, found in Beijerinckia indica subsp. indica (strain ATCC 9039 / DSM 1715 / NCIMB 8712).